Here is a 165-residue protein sequence, read N- to C-terminus: Thiol peroxidase (165 aa).

The Thioredoxin domain occupies 18 to 165; the sequence is PQVGDVVTDF…PNYDAALAVL (148 aa). The active-site Cysteine sulfenic acid (-SOH) intermediate is cysteine 60. Cysteines 60 and 94 form a disulfide.

Belongs to the peroxiredoxin family. Tpx subfamily. As to quaternary structure, homodimer.

It catalyses the reaction a hydroperoxide + [thioredoxin]-dithiol = an alcohol + [thioredoxin]-disulfide + H2O. Functionally, thiol-specific peroxidase that catalyzes the reduction of hydrogen peroxide and organic hydroperoxides to water and alcohols, respectively. Plays a role in cell protection against oxidative stress by detoxifying peroxides. The sequence is that of Thiol peroxidase from Pasteurella multocida (strain Pm70).